A 67-amino-acid chain; its full sequence is Large ribosomal subunit protein bL35 (67 aa).

This sequence belongs to the bacterial ribosomal protein bL35 family.

This is Large ribosomal subunit protein bL35 from Methylorubrum extorquens (strain CM4 / NCIMB 13688) (Methylobacterium extorquens).